Here is a 439-residue protein sequence, read N- to C-terminus: Niacin transporter NiaP (439 aa).

12 consecutive transmembrane segments (helical) span residues 20 to 40 (LWVVGLGWMFDALDTGIIAFI), 57 to 77 (WIVSIGFIGMALGAVFSGGLA), 84 to 104 (TVFATTLLIYSLATAACAFAP), 108 to 128 (WLLAFRFIVGLGLGGQLPVAV), 143 to 163 (FIVLLESFWGLGWLVAALVSY), 169 to 189 (FGWHIAFLIGGLPAIYVYVII), 253 to 273 (LMLWLVWFGIVFSYYGIFTWL), 288 to 308 (FEYVLIMILAQLPGYISAAWL), 316 to 336 (ATLAGFIGACAISAYFFGQAD), 338 to 358 (VFNIMVWGCLLSFFNLGAWGV), 374 to 394 (FGAGWASAVGRMGGIAAPIVV), and 407 to 427 (VFMMFTLVLLAVAAVIVILGE).

Belongs to the major facilitator superfamily. Sugar transporter (TC 2.A.1.1) family.

The protein localises to the cell inner membrane. Functions as a high-affinity transporter of niacin (nicotinamide or nicotinate). Probably substantially contributes to niacin transport when its concentration in the medium is very low. This Acinetobacter baylyi (strain ATCC 33305 / BD413 / ADP1) protein is Niacin transporter NiaP.